The primary structure comprises 336 residues: E3 ubiquitin-protein ligase RING2 (336 aa).

The interval 2–179 is interaction with HIP2; sequence TQTVQTNGVQ…AEDNGDSSHC (178 aa). An RING-type zinc finger spans residues 51–91; that stretch reads CPICLDMLKNTMTTKECLHRFCADCIITALRSGNKECPTCR. The interaction with nucleosomes via an acidic patch on histone H2A and histone H2B stretch occupies residues 93–98; that stretch reads KLVSKR. The segment at 158-218 is disordered; the sequence is RGKKHQIENG…NATENGGGDI (61 aa). Positions 176–190 are enriched in polar residues; sequence SSHCSNASVHSNQEA.

Component of chromatin-associated Polycomb (PcG) complexes. Component of a PRC1-like complex. Component of some MLL1/MLL complex.

The protein localises to the nucleus. The protein resides in the cytoplasm. It is found in the chromosome. It carries out the reaction S-ubiquitinyl-[E2 ubiquitin-conjugating enzyme]-L-cysteine + [acceptor protein]-L-lysine = [E2 ubiquitin-conjugating enzyme]-L-cysteine + N(6)-ubiquitinyl-[acceptor protein]-L-lysine.. Its pathway is protein modification; protein ubiquitination. Its function is as follows. E3 ubiquitin-protein ligase that mediates monoubiquitination of 'Lys-119' of histone H2A (H2AK119Ub), thereby playing a central role in histone code and gene regulation. H2AK119Ub gives a specific tag for epigenetic transcriptional repression. Essential component of a Polycomb group (PcG) multiprotein PRC1-like complex, a complex class required to maintain the transcriptionally repressive state of many genes, including Hox genes, throughout development. PcG PRC1 complex acts via chromatin remodeling and modification of histones, rendering chromatin heritably changed in its expressibility. The sequence is that of E3 ubiquitin-protein ligase RING2 (rnf2) from Danio rerio (Zebrafish).